Here is a 156-residue protein sequence, read N- to C-terminus: Sec-independent protein translocase protein TatB (156 aa).

The chain crosses the membrane as a helical span at residues 2–22 (FSSVGWGEIFLLVVVGLVVIG). The tract at residues 100 to 156 (KIMAEGTEGEAQRNKQAADNNANVVERPADGSTARPTQNDPKDGPNYSGGVSWTDII) is disordered. Polar residues predominate over residues 113-122 (NKQAADNNAN).

The protein belongs to the TatB family. The Tat system comprises two distinct complexes: a TatABC complex, containing multiple copies of TatA, TatB and TatC subunits, and a separate TatA complex, containing only TatA subunits. Substrates initially bind to the TatABC complex, which probably triggers association of the separate TatA complex to form the active translocon.

It localises to the cell membrane. Part of the twin-arginine translocation (Tat) system that transports large folded proteins containing a characteristic twin-arginine motif in their signal peptide across membranes. Together with TatC, TatB is part of a receptor directly interacting with Tat signal peptides. TatB may form an oligomeric binding site that transiently accommodates folded Tat precursor proteins before their translocation. The protein is Sec-independent protein translocase protein TatB of Corynebacterium glutamicum (strain ATCC 13032 / DSM 20300 / JCM 1318 / BCRC 11384 / CCUG 27702 / LMG 3730 / NBRC 12168 / NCIMB 10025 / NRRL B-2784 / 534).